Consider the following 115-residue polypeptide: Glycine cleavage system H-like protein (115 aa).

The Lipoyl-binding domain occupies Val17–Arg99. At Lys58 the chain carries N6-lipoyllysine.

Belongs to the GcvH family. It depends on (R)-lipoate as a cofactor.

The chain is Glycine cleavage system H-like protein from Chlamydia pneumoniae (Chlamydophila pneumoniae).